The primary structure comprises 247 residues: 1-(5-phosphoribosyl)-5-[(5-phosphoribosylamino)methylideneamino] imidazole-4-carboxamide isomerase (247 aa).

Asp-8 functions as the Proton acceptor in the catalytic mechanism. The active-site Proton donor is Asp-131.

Belongs to the HisA/HisF family.

Its subcellular location is the cytoplasm. It carries out the reaction 1-(5-phospho-beta-D-ribosyl)-5-[(5-phospho-beta-D-ribosylamino)methylideneamino]imidazole-4-carboxamide = 5-[(5-phospho-1-deoxy-D-ribulos-1-ylimino)methylamino]-1-(5-phospho-beta-D-ribosyl)imidazole-4-carboxamide. The protein operates within amino-acid biosynthesis; L-histidine biosynthesis; L-histidine from 5-phospho-alpha-D-ribose 1-diphosphate: step 4/9. The chain is 1-(5-phosphoribosyl)-5-[(5-phosphoribosylamino)methylideneamino] imidazole-4-carboxamide isomerase from Cupriavidus metallidurans (strain ATCC 43123 / DSM 2839 / NBRC 102507 / CH34) (Ralstonia metallidurans).